The chain runs to 508 residues: MFLHILCLLAGQALADDYRPVFHFVPEKNWMNEPNGLIKIGSTWHLFYQHNPTANVWGNLNWGHATSSDLVHWTHEPLAITSENGIEAFTGTSYYDAENTSGLGTSDNPPYLAWYTGYFPSNGTQDQRLAFSIDAGETWTKFEGNPVISAAQEAPHDATGGLETRDPKVFFHADSGKWIMVLAHGGQNKMSFWTSVDAKRWSWASDLTSTQVPGLPSAVKGWEVPDMFEVPVHGTDKTTWVLIFTPAEGSPAGGNGVLALTGSFDGTVFHPNPVNVSTLWLDYGRDFDGALSWENLPDSDGHRILAAISNSYGANPPTNTWKGMLSFPRTLSLHQSQTGQYFLQQPVSNLDTVSTPLVSVKNQTIAPGQVLLSSVRGTALDIRIAFSANAGTVLSLAVRKAGSQETVIQYRQSDATLSVDRTTSGLTSYDPAAGGVHTAPLRPDASGVVQIRALVDTCSVEVFGGQGEVVISDLIFPDETSDGLALQVIGGTAVLRSLEKFPRLGAVL.

The first 15 residues, 1–15 (MFLHILCLLAGQALA), serve as a signal peptide directing secretion. N-linked (GlcNAc...) asparagine glycans are attached at residues N99, N122, N275, and N362.

Belongs to the glycosyl hydrolase 32 family.

The sequence is that of Putative glycosyl hydrolase ecdF from Aspergillus rugulosus (Emericella rugulosa).